A 145-amino-acid chain; its full sequence is D-aminoacyl-tRNA deacylase (145 aa).

The short motif at 137–138 is the Gly-cisPro motif, important for rejection of L-amino acids element; it reads GP.

The protein belongs to the DTD family. Homodimer.

It localises to the cytoplasm. The enzyme catalyses glycyl-tRNA(Ala) + H2O = tRNA(Ala) + glycine + H(+). The catalysed reaction is a D-aminoacyl-tRNA + H2O = a tRNA + a D-alpha-amino acid + H(+). An aminoacyl-tRNA editing enzyme that deacylates mischarged D-aminoacyl-tRNAs. Also deacylates mischarged glycyl-tRNA(Ala), protecting cells against glycine mischarging by AlaRS. Acts via tRNA-based rather than protein-based catalysis; rejects L-amino acids rather than detecting D-amino acids in the active site. By recycling D-aminoacyl-tRNA to D-amino acids and free tRNA molecules, this enzyme counteracts the toxicity associated with the formation of D-aminoacyl-tRNA entities in vivo and helps enforce protein L-homochirality. The polypeptide is D-aminoacyl-tRNA deacylase (Photorhabdus laumondii subsp. laumondii (strain DSM 15139 / CIP 105565 / TT01) (Photorhabdus luminescens subsp. laumondii)).